A 420-amino-acid chain; its full sequence is Corticotropin-releasing factor receptor 1 (420 aa).

Residues 1–28 form the signal peptide; the sequence is MVPGPRPALLLLLFLLQAFLLWDSPVAA. Residues 29-116 lie on the Extracellular side of the membrane; that stretch reads SIQEQYCESL…CQEILSEEKR (88 aa). 3 cysteine pairs are disulfide-bonded: Cys35/Cys59, Cys49/Cys92, and Cys73/Cys107. N-linked (GlcNAc...) asparagine glycosylation is found at Asn43, Asn50, Asn83, Asn95, and Asn103. Residues 117–147 form a helical membrane-spanning segment; the sequence is SKLHYHIAVIINYLGHCVSLGTLLVAFVLFM. Residues 148-154 lie on the Cytoplasmic side of the membrane; the sequence is RLRSIRC. A helical transmembrane segment spans residues 155–179; it reads LRNIIHWNLITAFILRNATWFVVQL. Topologically, residues 180 to 194 are extracellular; that stretch reads TMNPEVHESNVVWCR. Cysteines 193 and 263 form a disulfide. Residues 195 to 223 form a helical membrane-spanning segment; that stretch reads LVTAAYNYFHVTNFFWMFGEGCYLHTAIV. The Cytoplasmic portion of the chain corresponds to 224-230; sequence LTYSTDK. Residues 231–258 traverse the membrane as a helical segment; it reads LRKWMFICIGWCIPFPIIVAWAIGKLYY. Residues 259-274 lie on the Extracellular side of the membrane; sequence DNEKCWFGKRAGVYTD. The chain crosses the membrane as a helical span at residues 275–300; sequence YIYQGPMILVLLINFIFLFNIVRILM. Topologically, residues 301 to 311 are cytoplasmic; it reads TKLRASTTSET. Residues 312 to 336 form a helical membrane-spanning segment; it reads IQYRKAVKATLVLLSLLGITYMLFF. The Extracellular portion of the chain corresponds to 337-343; it reads VNPGEDE. Residues 344–373 traverse the membrane as a helical segment; that stretch reads ISRIVFIYFNSFLESFQGFFVSVFYCFLNS. The Cytoplasmic segment spans residues 374–420; the sequence is EVRSAVRKRWHRWQDKHSIRARVARAMSIPTSPTRVSFHSIKQSSAV.

Belongs to the G-protein coupled receptor 2 family. As to quaternary structure, interacts (via N-terminal extracellular domain) with CRF and UCN.

The protein localises to the cell membrane. Its function is as follows. G-protein coupled receptor for CRH (corticotropin-releasing factor) and UCN (urocortin). Has high affinity for CRH and UCN. Ligand binding causes a conformation change that triggers signaling via guanine nucleotide-binding proteins (G proteins) and down-stream effectors, such as adenylate cyclase. Promotes the activation of adenylate cyclase, leading to increased intracellular cAMP levels. The polypeptide is Corticotropin-releasing factor receptor 1 (CRHR1) (Gallus gallus (Chicken)).